We begin with the raw amino-acid sequence, 60 residues long: Large ribosomal subunit protein uL30 (60 aa).

The protein belongs to the universal ribosomal protein uL30 family. Part of the 50S ribosomal subunit.

The sequence is that of Large ribosomal subunit protein uL30 from Paraburkholderia phytofirmans (strain DSM 17436 / LMG 22146 / PsJN) (Burkholderia phytofirmans).